The sequence spans 349 residues: Twinfilin-2 (349 aa).

2 consecutive ADF-H domains span residues 4-139 (QTGI…KHVS) and 177-313 (GLAF…DEVH). The interval 324–349 (AKPKGPVGKRGQKRLIKGPGENGEDS) is disordered.

The protein belongs to the actin-binding proteins ADF family. Twinfilin subfamily. As to quaternary structure, interacts with G-actin; ADP-actin form and capping protein (CP).

Its subcellular location is the cytoplasm. It localises to the cytoskeleton. The protein resides in the perinuclear region. In terms of biological role, actin-binding protein involved in motile and morphological processes. Inhibits actin polymerization, likely by sequestering G-actin. This Gallus gallus (Chicken) protein is Twinfilin-2 (TWF2).